A 150-amino-acid chain; its full sequence is MRVWIDADACPKAAKDLIVKFALKRKFEVVMVAGQAVAKPAFAIVRLIVVPSGMDAADDYIVEHAVPGELVICSDVPLADRLVKKGVAALDPRGREFDERNMGDRLAARNLFTELREQGQVGGGQAAYGEREKQAFANALDRIIARLSKG.

This sequence belongs to the UPF0178 family.

In Pseudomonas putida (strain ATCC 47054 / DSM 6125 / CFBP 8728 / NCIMB 11950 / KT2440), this protein is UPF0178 protein PP_5221.